The following is a 746-amino-acid chain: Protein C-mannosyl-transferase DPY19L1 (746 aa).

The segment at 1 to 68 (MVLQARSKHR…RAETAAPAPD (68 aa)) is disordered. Pro residues predominate over residues 14–27 (PRPPRPARSSPPPL). Helical transmembrane passes span 93-113 (STLL…TQLF), 139-159 (YSYF…WMIM), 227-247 (ACFY…LFFI), 248-268 (YGTY…CFFF), 308-328 (YRGS…PWQF), 329-349 (AQFV…VGYI), 357-377 (IIYT…GNSM), 378-398 (LLTS…AMKP), 405-425 (VSEL…TVTL), 481-501 (LLLP…INDM), 520-540 (GELV…ILIM), and 562-582 (LFGW…VLAA).

Belongs to the dpy-19 family.

The protein resides in the endoplasmic reticulum membrane. The catalysed reaction is L-tryptophyl-[protein] + a di-trans,poly-cis-dolichyl beta-D-mannosyl phosphate = C-alpha-D-mannosyl-L-tryptophyl-[protein] + a di-trans,poly-cis-dolichyl phosphate + H(+). The protein operates within protein modification; protein glycosylation. Its function is as follows. C-mannosyltransferase that mediates the C-mannosylation tryptophan residues on target proteins. The reaction occurs on the luminal side of the endoplasmic reticulum and involves the transfer of a mannose unit from a dolichylphosphate mannose (Dol-P-Man) donor to an acceptor protein containing a WxxW consensus sequence. C-mannosylates the first two tryptophans in the WxxWxxWxxC sequence motif in thrombospondin (TSP) type-1 repeats of UNC5A. Regulates neurite extension during development. The protein is Protein C-mannosyl-transferase DPY19L1 (Dpy19l1) of Rattus norvegicus (Rat).